We begin with the raw amino-acid sequence, 323 residues long: Formyltetrahydrofolate deformylase 1, mitochondrial (323 aa).

Residues 1-25 (MIRRITERASGFAKNIPILKSSRFH) constitute a mitochondrion transit peptide. The ACT domain occupies 41–124 (VHVFHCQDAV…SVVRVPSIDP (84 aa)). D267 is a catalytic residue.

The protein belongs to the PurU family. Expressed in leaves, cotyledons, roots, seeds and flowers.

The protein resides in the mitochondrion. It carries out the reaction (6R)-10-formyltetrahydrofolate + H2O = (6S)-5,6,7,8-tetrahydrofolate + formate + H(+). Deformylase involved in photorespiration. Prevents excessive accumulation of 5-formyl tetrahydrofolate (THF), a potent inhibitor of the Gly decarboxylase/Ser hydroxymethyltransferase complex. In Arabidopsis thaliana (Mouse-ear cress), this protein is Formyltetrahydrofolate deformylase 1, mitochondrial (PURU1).